A 274-amino-acid chain; its full sequence is NADPH-dependent 7-cyano-7-deazaguanine reductase (274 aa).

80–82 (VES) lines the substrate pocket. Position 82–83 (82–83 (SK)) interacts with NADPH. The active-site Thioimide intermediate is the Cys-181. Asp-188 acts as the Proton donor in catalysis. Residue 220-221 (HE) coordinates substrate. 249 to 250 (RG) contributes to the NADPH binding site.

It belongs to the GTP cyclohydrolase I family. QueF type 2 subfamily. In terms of assembly, homodimer.

The protein localises to the cytoplasm. It catalyses the reaction 7-aminomethyl-7-carbaguanine + 2 NADP(+) = 7-cyano-7-deazaguanine + 2 NADPH + 3 H(+). Its pathway is tRNA modification; tRNA-queuosine biosynthesis. Its function is as follows. Catalyzes the NADPH-dependent reduction of 7-cyano-7-deazaguanine (preQ0) to 7-aminomethyl-7-deazaguanine (preQ1). The chain is NADPH-dependent 7-cyano-7-deazaguanine reductase from Paraburkholderia phytofirmans (strain DSM 17436 / LMG 22146 / PsJN) (Burkholderia phytofirmans).